A 258-amino-acid chain; its full sequence is Indole-3-glycerol phosphate synthase (258 aa).

The protein belongs to the TrpC family.

The enzyme catalyses 1-(2-carboxyphenylamino)-1-deoxy-D-ribulose 5-phosphate + H(+) = (1S,2R)-1-C-(indol-3-yl)glycerol 3-phosphate + CO2 + H2O. Its pathway is amino-acid biosynthesis; L-tryptophan biosynthesis; L-tryptophan from chorismate: step 4/5. This Nautilia profundicola (strain ATCC BAA-1463 / DSM 18972 / AmH) protein is Indole-3-glycerol phosphate synthase.